The chain runs to 172 residues: Adenylate kinase isoenzyme 6 (172 aa).

ATP is bound by residues Gly13, Gly15, Lys16, Thr17, and Thr18. Positions 33–56 are NMPbind; that stretch reads NVGDLAREGHLYDGYDEEYGCPIL. The segment at 108–118 is LID; sequence TRGYHEKKLQD. Arg109 contributes to the ATP binding site.

The protein belongs to the adenylate kinase family. AK6 subfamily. Monomer and homodimer. Interacts with small ribosomal subunit protein uS11. Not a structural component of 43S pre-ribosomes, but transiently interacts with them by binding to uS11. Interacts with COIL (via C-terminus).

Its subcellular location is the cytoplasm. The protein resides in the nucleus. It is found in the nucleoplasm. It localises to the cajal body. The enzyme catalyses AMP + ATP = 2 ADP. It catalyses the reaction ATP + H2O = ADP + phosphate + H(+). Functionally, broad-specificity nucleoside monophosphate (NMP) kinase that catalyzes the reversible transfer of the terminal phosphate group between nucleoside triphosphates and monophosphates. Also has ATPase activity. Involved in the late cytoplasmic maturation steps of the 40S ribosomal particles, specifically 18S rRNA maturation. While NMP activity is not required for ribosome maturation, ATPase activity is. Associates transiently with small ribosomal subunit protein uS11. ATP hydrolysis breaks the interaction with uS11. May temporarily remove uS11 from the ribosome to enable a conformational change of the ribosomal RNA that is needed for the final maturation step of the small ribosomal subunit. Its NMP activity may have a role in nuclear energy homeostasis. May be involved in regulation of Cajal body (CB) formation. This is Adenylate kinase isoenzyme 6 from Rattus norvegicus (Rat).